A 153-amino-acid polypeptide reads, in one-letter code: Hydrogenase expression/formation protein HoxT (153 aa).

This sequence belongs to the HupJ family.

The sequence is that of Hydrogenase expression/formation protein HoxT (hoxT) from Azotobacter vinelandii.